We begin with the raw amino-acid sequence, 606 residues long: Elongation factor 4 (606 aa).

The region spanning 11-193 (DKIRNFSIVA…AIVTRLPPPK (183 aa)) is the tr-type G domain. Residues 23–28 (DHGKST) and 140–143 (NKVD) each bind GTP.

This sequence belongs to the TRAFAC class translation factor GTPase superfamily. Classic translation factor GTPase family. LepA subfamily.

Its subcellular location is the cell inner membrane. The catalysed reaction is GTP + H2O = GDP + phosphate + H(+). Required for accurate and efficient protein synthesis under certain stress conditions. May act as a fidelity factor of the translation reaction, by catalyzing a one-codon backward translocation of tRNAs on improperly translocated ribosomes. Back-translocation proceeds from a post-translocation (POST) complex to a pre-translocation (PRE) complex, thus giving elongation factor G a second chance to translocate the tRNAs correctly. Binds to ribosomes in a GTP-dependent manner. The sequence is that of Elongation factor 4 from Caulobacter vibrioides (strain ATCC 19089 / CIP 103742 / CB 15) (Caulobacter crescentus).